Here is a 553-residue protein sequence, read N- to C-terminus: Hydroxylamine reductase (553 aa).

The [2Fe-2S] cluster site is built by C3, C6, C18, and C25. 8 residues coordinate hybrid [4Fe-2O-2S] cluster: H249, E273, C317, C405, C433, C459, E493, and K495. C405 bears the Cysteine persulfide mark.

This sequence belongs to the HCP family. The cofactor is [2Fe-2S] cluster. Hybrid [4Fe-2O-2S] cluster serves as cofactor.

Its subcellular location is the cytoplasm. The enzyme catalyses A + NH4(+) + H2O = hydroxylamine + AH2 + H(+). Catalyzes the reduction of hydroxylamine to form NH(3) and H(2)O. The chain is Hydroxylamine reductase from Actinobacillus succinogenes (strain ATCC 55618 / DSM 22257 / CCUG 43843 / 130Z).